The primary structure comprises 316 residues: UDP-N-acetylenolpyruvoylglucosamine reductase (316 aa).

The 165-residue stretch at 30-194 folds into the FAD-binding PCMH-type domain; the sequence is VGGEADYLVF…LSVKFALAPG (165 aa). The active site involves R173. S223 functions as the Proton donor in the catalytic mechanism. The active site involves E293.

It belongs to the MurB family. FAD serves as cofactor.

The protein resides in the cytoplasm. The catalysed reaction is UDP-N-acetyl-alpha-D-muramate + NADP(+) = UDP-N-acetyl-3-O-(1-carboxyvinyl)-alpha-D-glucosamine + NADPH + H(+). Its pathway is cell wall biogenesis; peptidoglycan biosynthesis. Functionally, cell wall formation. In Streptococcus pneumoniae serotype 2 (strain D39 / NCTC 7466), this protein is UDP-N-acetylenolpyruvoylglucosamine reductase.